The following is a 248-amino-acid chain: Large ribosomal subunit protein uL4 (248 aa).

2 disordered regions span residues 48-95 (GTHK…GPVP) and 210-248 (AFSE…RTGA). Basic and acidic residues predominate over residues 233 to 248 (DATKARSSRHDDRTGA).

It belongs to the universal ribosomal protein uL4 family. As to quaternary structure, part of the 50S ribosomal subunit.

Functionally, one of the primary rRNA binding proteins, this protein initially binds near the 5'-end of the 23S rRNA. It is important during the early stages of 50S assembly. It makes multiple contacts with different domains of the 23S rRNA in the assembled 50S subunit and ribosome. Forms part of the polypeptide exit tunnel. This is Large ribosomal subunit protein uL4 from Tropheryma whipplei (strain TW08/27) (Whipple's bacillus).